Here is a 449-residue protein sequence, read N- to C-terminus: tRNA-2-methylthio-N(6)-dimethylallyladenosine synthase (449 aa).

Residues 4–119 (RTFHIETFGC…APQALDRLVE (116 aa)) enclose the MTTase N-terminal domain. Residues Cys-13, Cys-48, Cys-82, Cys-158, Cys-162, and Cys-165 each coordinate [4Fe-4S] cluster. The Radical SAM core domain occupies 144–375 (GAVPASVFVN…QTLQNRLTER (232 aa)). The TRAM domain maps to 378 to 446 (QDMVGRKVEV…KHSLLAEQAG (69 aa)).

It belongs to the methylthiotransferase family. MiaB subfamily. As to quaternary structure, monomer. [4Fe-4S] cluster serves as cofactor.

The protein resides in the cytoplasm. The enzyme catalyses N(6)-dimethylallyladenosine(37) in tRNA + (sulfur carrier)-SH + AH2 + 2 S-adenosyl-L-methionine = 2-methylsulfanyl-N(6)-dimethylallyladenosine(37) in tRNA + (sulfur carrier)-H + 5'-deoxyadenosine + L-methionine + A + S-adenosyl-L-homocysteine + 2 H(+). Functionally, catalyzes the methylthiolation of N6-(dimethylallyl)adenosine (i(6)A), leading to the formation of 2-methylthio-N6-(dimethylallyl)adenosine (ms(2)i(6)A) at position 37 in tRNAs that read codons beginning with uridine. The protein is tRNA-2-methylthio-N(6)-dimethylallyladenosine synthase of Nitratidesulfovibrio vulgaris (strain ATCC 29579 / DSM 644 / CCUG 34227 / NCIMB 8303 / VKM B-1760 / Hildenborough) (Desulfovibrio vulgaris).